A 169-amino-acid polypeptide reads, in one-letter code: Transcription antitermination protein NusB (169 aa).

The tract at residues 1 to 23 (MADSKKPAIKKPVPKGDRKANRR) is disordered.

Belongs to the NusB family.

In terms of biological role, involved in transcription antitermination. Required for transcription of ribosomal RNA (rRNA) genes. Binds specifically to the boxA antiterminator sequence of the ribosomal RNA (rrn) operons. This chain is Transcription antitermination protein NusB, found in Rhodopseudomonas palustris (strain HaA2).